A 179-amino-acid polypeptide reads, in one-letter code: Adenine phosphoribosyltransferase (179 aa).

This sequence belongs to the purine/pyrimidine phosphoribosyltransferase family. As to quaternary structure, homodimer.

Its subcellular location is the cytoplasm. It catalyses the reaction AMP + diphosphate = 5-phospho-alpha-D-ribose 1-diphosphate + adenine. Its pathway is purine metabolism; AMP biosynthesis via salvage pathway; AMP from adenine: step 1/1. Functionally, catalyzes a salvage reaction resulting in the formation of AMP, that is energically less costly than de novo synthesis. This chain is Adenine phosphoribosyltransferase, found in Actinobacillus pleuropneumoniae serotype 5b (strain L20).